We begin with the raw amino-acid sequence, 146 residues long: Hemoglobin subunit beta (146 aa).

The Globin domain occupies 2-146 (QWSAEEKQLI…VAHALARKYH (145 aa)). Heme b-binding residues include H63 and H92.

It belongs to the globin family. Heterotetramer of two alpha chains and two beta chains. Red blood cells.

Its function is as follows. Involved in oxygen transport from the lung to the various peripheral tissues. The protein is Hemoglobin subunit beta (HBB) of Struthio camelus (Common ostrich).